Consider the following 288-residue polypeptide: NAD(P)H-hydrate epimerase (288 aa).

Residues 1 to 32 (MSGLRALLGLGLLVAGSRLSRVRVQAGSCRAG) constitute a mitochondrion transit peptide. A Phosphoserine modification is found at Ser49. Residues 65-275 (AQAVDQELFN…ALEKKYQLNL (211 aa)) enclose the YjeF N-terminal domain. 119–123 (NNGGD) contributes to the (6S)-NADPHX binding site. Asn120 contributes to the K(+) binding site. Residue Lys144 is modified to N6-succinyllysine. Position 185 (Asp185) interacts with K(+). (6S)-NADPHX-binding positions include 189-195 (GFSFTGE) and Asp218. Position 221 (Ser221) interacts with K(+).

It belongs to the NnrE/AIBP family. Homodimer. Interacts with APOA1 and APOA2. Requires K(+) as cofactor. In terms of processing, undergoes physiological phosphorylation during sperm capacitation, downstream to PKA activation.

Its subcellular location is the mitochondrion. It localises to the secreted. The catalysed reaction is (6R)-NADHX = (6S)-NADHX. The enzyme catalyses (6R)-NADPHX = (6S)-NADPHX. Functionally, catalyzes the epimerization of the S- and R-forms of NAD(P)HX, a damaged form of NAD(P)H that is a result of enzymatic or heat-dependent hydration. This is a prerequisite for the S-specific NAD(P)H-hydrate dehydratase to allow the repair of both epimers of NAD(P)HX. Accelerates cholesterol efflux from endothelial cells to high-density lipoprotein (HDL) and thereby regulates angiogenesis. This is NAD(P)H-hydrate epimerase from Bos taurus (Bovine).